A 359-amino-acid chain; its full sequence is Mitochondrial calcium uniporter regulator 1 (359 aa).

The Mitochondrial intermembrane segment spans residues 1–68; that stretch reads MDCGSVGGQR…ARGGVSRASP (68 aa). A helical membrane pass occupies residues 69 to 85; that stretch reads LLLLLLVPSPRLAAAAP. The Mitochondrial matrix portion of the chain corresponds to 86–338; that stretch reads RRQLGDWERS…LESHKLDNIK (253 aa). Positions 235–310 form a coiled coil; the sequence is EKSEFSALRA…VALHAQQDRA (76 aa). Residues 339-358 form a helical membrane-spanning segment; that stretch reads YLAGSIFTCLTVALGFYRLW. A topological domain (mitochondrial intermembrane) is located at residue isoleucine 359.

The protein belongs to the CCDC90 family. In terms of assembly, interacts (via coiled coil regions) with MCU; the interaction is direct. Interacts with SMDT1/EMRE; the interaction is direct. Interacts with PPIF. Ubiquitously expressed.

Its subcellular location is the mitochondrion inner membrane. Its function is as follows. Key regulator of mitochondrial calcium uniporter (MCU) required for calcium entry into mitochondrion. Plays a direct role in uniporter-mediated calcium uptake via a direct interaction with MCU. Probably involved in the assembly of the membrane components of the uniporter complex (uniplex). The sequence is that of Mitochondrial calcium uniporter regulator 1 from Homo sapiens (Human).